The primary structure comprises 497 residues: Cysteine desulfurase, mitochondrial (497 aa).

The transit peptide at 1–33 (MLKSTATRSITRLSQVYNVPAATYRACLVSRRF) directs the protein to the mitochondrion. Pyridoxal 5'-phosphate contacts are provided by residues 168-169 (AT), Asn248, Gln276, and 296-298 (SSH). Lys299 bears the N6-(pyridoxal phosphate)lysine mark. Thr336 is a pyridoxal 5'-phosphate binding site. The active-site Cysteine persulfide intermediate is the Cys421. Cys421 contributes to the [2Fe-2S] cluster binding site.

The protein belongs to the class-V pyridoxal-phosphate-dependent aminotransferase family. NifS/IscS subfamily. Requires pyridoxal 5'-phosphate as cofactor.

The protein localises to the mitochondrion. The catalysed reaction is (sulfur carrier)-H + L-cysteine = (sulfur carrier)-SH + L-alanine. Catalyzes the removal of elemental sulfur from cysteine to produce alanine. It supplies the inorganic sulfur for iron-sulfur (Fe-S) clusters. Plays a role in both tRNA-processing and mitochondrial metabolism. Involved in the 2-thio-modification of both 5-carboxymethylaminomethyl-2-thiouridine in mitochondrial tRNAs and 5-methoxycarbonylmethyl-2-thiouridine (mcm5s2U) in cytoplasmic tRNAs. This chain is Cysteine desulfurase, mitochondrial, found in Saccharomyces cerevisiae (strain ATCC 204508 / S288c) (Baker's yeast).